The primary structure comprises 345 residues: Anthranilate phosphoribosyltransferase (345 aa).

5-phospho-alpha-D-ribose 1-diphosphate contacts are provided by residues glycine 86, 89-90 (GD), threonine 94, 96-99 (NIST), 114-122 (KHGGRGVSS), and serine 126. Glycine 86 contributes to the anthranilate binding site. Serine 98 contributes to the Mg(2+) binding site. Arginine 172 serves as a coordination point for anthranilate. Residues aspartate 231 and glutamate 232 each contribute to the Mg(2+) site.

Belongs to the anthranilate phosphoribosyltransferase family. In terms of assembly, homodimer. Mg(2+) is required as a cofactor.

It carries out the reaction N-(5-phospho-beta-D-ribosyl)anthranilate + diphosphate = 5-phospho-alpha-D-ribose 1-diphosphate + anthranilate. The protein operates within amino-acid biosynthesis; L-tryptophan biosynthesis; L-tryptophan from chorismate: step 2/5. In terms of biological role, catalyzes the transfer of the phosphoribosyl group of 5-phosphorylribose-1-pyrophosphate (PRPP) to anthranilate to yield N-(5'-phosphoribosyl)-anthranilate (PRA). This Ralstonia pickettii (strain 12J) protein is Anthranilate phosphoribosyltransferase.